A 439-amino-acid chain; its full sequence is Taxadien-5-alpha-ol O-acetyltransferase (439 aa).

Catalysis depends on proton acceptor residues histidine 164 and aspartate 373.

It belongs to the plant acyltransferase family.

The catalysed reaction is taxa-4(20),11-dien-5alpha-ol + acetyl-CoA = taxa-4(20),11-dien-5alpha-yl acetate + CoA. It participates in alkaloid biosynthesis; taxol biosynthesis; 10-deacetyl-2-debenzoylbaccatin III from taxa-4(20),11-dien-5alpha-ol: step 1/3. The chain is Taxadien-5-alpha-ol O-acetyltransferase (TAT) from Taxus cuspidata (Japanese yew).